Reading from the N-terminus, the 546-residue chain is Glucose-6-phosphate isomerase 1 (546 aa).

The Proton donor role is filled by Glu-353. Catalysis depends on residues His-384 and Lys-512.

It belongs to the GPI family.

It is found in the cytoplasm. The catalysed reaction is alpha-D-glucose 6-phosphate = beta-D-fructose 6-phosphate. It functions in the pathway carbohydrate biosynthesis; gluconeogenesis. The protein operates within carbohydrate degradation; glycolysis; D-glyceraldehyde 3-phosphate and glycerone phosphate from D-glucose: step 2/4. Functionally, catalyzes the reversible isomerization of glucose-6-phosphate to fructose-6-phosphate. This Colwellia psychrerythraea (strain 34H / ATCC BAA-681) (Vibrio psychroerythus) protein is Glucose-6-phosphate isomerase 1.